A 381-amino-acid chain; its full sequence is Cytochrome b (381 aa).

Helical transmembrane passes span 34-54, 78-99, 114-134, and 179-199; these read FGSL…FLAM, WLIR…YLHI, WNIG…GYVL, and FFAF…IHLL. The heme b site is built by histidine 84 and histidine 98. Residues histidine 183 and histidine 197 each coordinate heme b. Histidine 202 provides a ligand contact to a ubiquinone. Helical transmembrane passes span 227–247, 289–309, 321–341, and 348–368; these read YKDL…ALFM, LGGV…PLLH, LTQI…WIGG, and FITV…IIMP.

This sequence belongs to the cytochrome b family. The cytochrome bc1 complex contains 3 respiratory subunits (MT-CYB, CYC1 and UQCRFS1), 2 core proteins (UQCRC1 and UQCRC2) and probably 6 low-molecular weight proteins. Heme b is required as a cofactor.

Its subcellular location is the mitochondrion inner membrane. Its function is as follows. Component of the ubiquinol-cytochrome c reductase complex (complex III or cytochrome b-c1 complex) that is part of the mitochondrial respiratory chain. The b-c1 complex mediates electron transfer from ubiquinol to cytochrome c. Contributes to the generation of a proton gradient across the mitochondrial membrane that is then used for ATP synthesis. The sequence is that of Cytochrome b (mt-cyb) from Sphyrna tiburo tiburo (Hammerhead shark).